A 2111-amino-acid chain; its full sequence is Mycocerosic acid synthase-like polyketide synthase (2111 aa).

Positions 1–15 (MTQNCVAPVAIIGMA) are cleaved as a signal peptide. The N-palmitoyl cysteine moiety is linked to residue cysteine 16. Cysteine 16 carries S-diacylglycerol cysteine lipidation. The region spanning 16–428 (CRLPGAINSP…GTNVHAVLEQ (413 aa)) is the Ketosynthase family 3 (KS3) domain. Cysteine 178 (acyl-thioester intermediate; for beta-ketoacyl synthase activity) is an active-site residue. Residues histidine 313 and histidine 349 each act as for beta-ketoacyl synthase activity in the active site. Residues 430–537 (PESPAETAAE…MPQQAVTNDD (108 aa)) form a linker domain (LD) region. The acyltransferase (AT) stretch occupies residues 538 to 837 (RGPVWVFSGQ…LAVFAAMRRQ (300 aa)). Residue serine 629 is the Acyl-ester intermediate; for acyltransferase activity of the active site. A dehydratase (DH) region spans residues 896–1176 (PSVSVHPLLG…LSAMGLQLGT (281 aa)). The interval 901–1025 (HPLLGSHVVL…GDVDAERPAA (125 aa)) is N-terminal hotdog fold. Residues 901–1183 (HPLLGSHVVL…LGTGNSDKAE (283 aa)) form the PKS/mFAS DH domain. Catalysis depends on histidine 934, which acts as the Proton acceptor; for dehydratase activity. The interval 1036 to 1183 (PNRVDGDELR…LGTGNSDKAE (148 aa)) is C-terminal hotdog fold. Aspartate 1100 (proton donor; for dehydratase activity) is an active-site residue. A pseudo beta-ketoacyl reductase (PsiKR) region spans residues 1215-1391 (SWLVILAGDD…SPEDETAWRD (177 aa)). Residues 1419 to 1743 (EGMRLVVRNP…QHTGKLVIDI (325 aa)) are enoylreductase (ER). The segment at 1765–2008 (GAYVITGGLG…RSPFAELFLA (244 aa)) is beta-ketoacyl reductase (KR). Residues 1773 to 1776 (LGGL), 1796 to 1799 (SRSA), 1824 to 1825 (DI), and 1902 to 1903 (FS) contribute to the NADP(+) site. One can recognise a Carrier domain in the interval 2029–2104 (EEWPTHLRRL…QRLCEMLDTD (76 aa)). Serine 2064 is modified (O-(pantetheine 4'-phosphoryl)serine).

Homodimer.

Its subcellular location is the cell membrane. It functions in the pathway lipid metabolism; fatty acid biosynthesis. Functionally, polyketide synthase involved in the biosynthesis of 2,4-dimethyl-2-eicosenoic acid, a lipid component of the lipooligosaccharides (LOS) which are not located at the bacterial surface but rather in deeper compartments of the cell envelope of M.smegmatis. In Mycolicibacterium smegmatis (strain ATCC 700084 / mc(2)155) (Mycobacterium smegmatis), this protein is Mycocerosic acid synthase-like polyketide synthase.